The primary structure comprises 385 residues: ATP synthase subunit a-1 (385 aa).

Residues 1–133 (MRRIFLFDEN…ALNIVGQAAA (133 aa)) constitute a propeptide that is removed on maturation. 7 helical membrane passes run 154–174 (FSFT…LLLI), 220–240 (FFPC…QGMI), 249–269 (HFLI…IVGF), 276–296 (FFSF…LVLL), 316–336 (MMAG…MLCM), 339–359 (IFYF…TGLE), and 362–382 (VAIL…NDAI).

It belongs to the ATPase A chain family. In terms of assembly, F-type ATPases have 2 components, CF(1) - the catalytic core - and CF(0) - the membrane proton channel. CF(1) has five subunits: alpha(3), beta(3), gamma(1), delta(1), epsilon(1). CF(0) has three main subunits: a, b and c.

The protein localises to the mitochondrion inner membrane. Functionally, mitochondrial membrane ATP synthase (F(1)F(0) ATP synthase or Complex V) produces ATP from ADP in the presence of a proton gradient across the membrane which is generated by electron transport complexes of the respiratory chain. F-type ATPases consist of two structural domains, F(1) - containing the extramembraneous catalytic core and F(0) - containing the membrane proton channel, linked together by a central stalk and a peripheral stalk. During catalysis, ATP synthesis in the catalytic domain of F(1) is coupled via a rotary mechanism of the central stalk subunits to proton translocation. Key component of the proton channel; it may play a direct role in the translocation of protons across the membrane. This chain is ATP synthase subunit a-1 (ATP6-1), found in Arabidopsis thaliana (Mouse-ear cress).